The sequence spans 300 residues: Acetylglutamate kinase (300 aa).

Substrate contacts are provided by residues 68-69 (GG), R90, and N194.

The protein belongs to the acetylglutamate kinase family. ArgB subfamily.

It localises to the cytoplasm. It catalyses the reaction N-acetyl-L-glutamate + ATP = N-acetyl-L-glutamyl 5-phosphate + ADP. It functions in the pathway amino-acid biosynthesis; L-arginine biosynthesis; N(2)-acetyl-L-ornithine from L-glutamate: step 2/4. Its function is as follows. Catalyzes the ATP-dependent phosphorylation of N-acetyl-L-glutamate. This is Acetylglutamate kinase from Methanocaldococcus jannaschii (strain ATCC 43067 / DSM 2661 / JAL-1 / JCM 10045 / NBRC 100440) (Methanococcus jannaschii).